The primary structure comprises 372 residues: 4-hydroxy-3-methylbut-2-en-1-yl diphosphate synthase (flavodoxin) (372 aa).

The [4Fe-4S] cluster site is built by Cys-270, Cys-273, Cys-305, and Glu-312.

This sequence belongs to the IspG family. It depends on [4Fe-4S] cluster as a cofactor.

The enzyme catalyses (2E)-4-hydroxy-3-methylbut-2-enyl diphosphate + oxidized [flavodoxin] + H2O + 2 H(+) = 2-C-methyl-D-erythritol 2,4-cyclic diphosphate + reduced [flavodoxin]. Its pathway is isoprenoid biosynthesis; isopentenyl diphosphate biosynthesis via DXP pathway; isopentenyl diphosphate from 1-deoxy-D-xylulose 5-phosphate: step 5/6. Converts 2C-methyl-D-erythritol 2,4-cyclodiphosphate (ME-2,4cPP) into 1-hydroxy-2-methyl-2-(E)-butenyl 4-diphosphate. This is 4-hydroxy-3-methylbut-2-en-1-yl diphosphate synthase (flavodoxin) from Vibrio vulnificus (strain CMCP6).